The chain runs to 895 residues: Ras and Rab interactor 2 (895 aa).

The SH2 domain occupies tryptophan 97–tyrosine 190. Residues leucine 284–leucine 361 form a disordered region. Positions serine 306–alanine 315 are enriched in pro residues. Over residues threonine 328–valine 338 the composition is skewed to polar residues. A Phosphoserine modification is found at serine 366. Disordered stretches follow at residues glycine 373 to leucine 442 and serine 460 to lysine 481. Residues serine 430–serine 441 are compositionally biased toward low complexity. Position 501 is a phosphoserine (serine 501). Position 509 is a phosphothreonine (threonine 509). Residues aspartate 618–alanine 757 enclose the VPS9 domain. Positions phenylalanine 787–asparagine 878 constitute a Ras-associating domain.

It belongs to the RIN (Ras interaction/interference) family. In terms of assembly, homotetramer; probably composed of anti-parallel linkage of two parallel dimers. Interacts with Ras. Interacts with RAB5B, with a much higher affinity for GTP-bound activated RAB5B. Does not interact with other members of the Rab family. Widely expressed. Expressed in heart, kidney, lung placenta. Expressed at low level in skeletal muscle, spleen and peripheral blood.

It is found in the cytoplasm. Functionally, ras effector protein. May function as an upstream activator and/or downstream effector for RAB5B in endocytic pathway. May function as a guanine nucleotide exchange (GEF) of RAB5B, required for activating the RAB5 proteins by exchanging bound GDP for free GTP. This chain is Ras and Rab interactor 2 (RIN2), found in Homo sapiens (Human).